Consider the following 577-residue polypeptide: Pentatricopeptide repeat-containing protein At2g01390 (577 aa).

PPR repeat units lie at residues D121 to I155, D156 to P190, T191 to P225, N226 to P260, D261 to L295, D382 to L416, K417 to L451, G452 to D482, G485 to P519, and S520 to S554.

This sequence belongs to the PPR family. P subfamily.

This is Pentatricopeptide repeat-containing protein At2g01390 from Arabidopsis thaliana (Mouse-ear cress).